The following is a 249-amino-acid chain: Meiotic drive suppressor wtf25 (249 aa).

Residues 1 to 40 (MKNNYTSLKSPLDEEDELKTDHEIDLEKGPLPEYDSEEEG) are disordered. Residues 19-30 (KTDHEIDLEKGP) are compositionally biased toward basic and acidic residues. Helical transmembrane passes span 73 to 93 (LLII…PAFC), 110 to 130 (WTLF…LTYF), 151 to 170 (NMIF…LKAE), and 187 to 207 (SASA…AETV).

Belongs to the WTF family. As to quaternary structure, homomer. Interacts with other proteins that exhibit high sequence similarity.

Its subcellular location is the spore membrane. It is found in the vacuole membrane. In terms of biological role, acts as a suppressor component of the dual wtf meiotic drive system, and can suppress but not confer meiotic drive by compatible poisons. Wtf meiotic drive systems promote unequal transmission of alleles from the parental zygote to progeny spores by encoding a poison and an antidote from the same locus; the poison is trans-acting and forms toxic aggregates in all spores within an ascus, wherease the antidote is spore-specific and targets aggregates for degradation by the vacuole. Meiotic drive by wtf systems therefore lead to poisoning of all progeny that do not inherit the dual poison/antidote allele, or express a compatible antidote. This is Meiotic drive suppressor wtf25 from Schizosaccharomyces pombe (strain 972 / ATCC 24843) (Fission yeast).